The following is a 240-amino-acid chain: Phosphoribosyl isomerase A (240 aa).

D11 acts as the Proton acceptor in catalysis. D130 serves as the catalytic Proton donor.

It belongs to the HisA/HisF family. Monomer.

The protein localises to the cytoplasm. It catalyses the reaction 1-(5-phospho-beta-D-ribosyl)-5-[(5-phospho-beta-D-ribosylamino)methylideneamino]imidazole-4-carboxamide = 5-[(5-phospho-1-deoxy-D-ribulos-1-ylimino)methylamino]-1-(5-phospho-beta-D-ribosyl)imidazole-4-carboxamide. The enzyme catalyses N-(5-phospho-beta-D-ribosyl)anthranilate = 1-(2-carboxyphenylamino)-1-deoxy-D-ribulose 5-phosphate. The protein operates within amino-acid biosynthesis; L-histidine biosynthesis; L-histidine from 5-phospho-alpha-D-ribose 1-diphosphate: step 4/9. It functions in the pathway amino-acid biosynthesis; L-tryptophan biosynthesis; L-tryptophan from chorismate: step 3/5. Functionally, catalyzes the isomerization of the aminoaldose moiety of ProFAR to the aminoketose of PRFAR in the biosynthesis pathway for histidine and the isomerization of the aminoaldose PRA to the aminoketose CdRP in the biosynthsis pathway for tryptophan. The sequence is that of Phosphoribosyl isomerase A (priA) from Streptomyces coelicolor (strain ATCC BAA-471 / A3(2) / M145).